A 427-amino-acid polypeptide reads, in one-letter code: Rhodocoxin reductase (427 aa).

Position 2–34 (2–34 (SIVIIGSGQAGFEAAVSLRSHGFSGTITLVGDE)) interacts with FAD. 144–172 (SLVVIGAGFIGLEVAAAARKKGLDVTVVE) contributes to the NAD(+) binding site.

The protein belongs to the FAD-dependent oxidoreductase family. FAD is required as a cofactor.

Functionally, the degradation of the thiocarbamate herbicide EPTC by cytochrome CYP116 (thcB) requires the participation of a flavoprotein, rhodocoxin reductase, and an iron-sulfur protein, rhodocoxin, to mediate the transfer of electrons from NADH to P450 for oxygen activation. The sequence is that of Rhodocoxin reductase (thcD) from Rhodococcus erythropolis (Arthrobacter picolinophilus).